A 95-amino-acid polypeptide reads, in one-letter code: MSYLLASALLFALGVYGVLTRRTAILVFLSIELMLNAANLSLVGFARAYGLDGQVAALMVIAVAAAEVAVGLGLIVAIFRHRESTAVDDLSELRG.

A run of 3 helical transmembrane segments spans residues 1-21 (MSYL…VLTR), 25-45 (ILVF…LVGF), and 59-79 (MVIA…VAIF).

The protein belongs to the complex I subunit 4L family. NDH-1 is composed of 15 different subunits. Subunits NuoA, H, J, K, L, M, N constitute the membrane sector of the complex.

It is found in the cell inner membrane. It carries out the reaction a quinone + NADH + 5 H(+)(in) = a quinol + NAD(+) + 4 H(+)(out). In terms of biological role, NDH-1 shuttles electrons from NADH, via FMN and iron-sulfur (Fe-S) centers, to quinones in the respiratory chain. The immediate electron acceptor for the enzyme in this species is believed to be a menaquinone. Couples the redox reaction to proton translocation (for every two electrons transferred, four hydrogen ions are translocated across the cytoplasmic membrane), and thus conserves the redox energy in a proton gradient. The chain is NADH-quinone oxidoreductase subunit K from Thermus thermophilus (strain ATCC BAA-163 / DSM 7039 / HB27).